Reading from the N-terminus, the 323-residue chain is Aldo-keto reductase family 1 member C2 (323 aa).

NADP(+)-binding positions include 20–24 (GFGTY) and aspartate 50. Position 24 (tyrosine 24) interacts with substrate. Tyrosine 55 (proton donor) is an active-site residue. Histidine 117 contacts substrate. Residues 166-167 (SN), glutamine 190, and 216-222 (YSALGSH) each bind NADP(+). The substrate site is built by histidine 222 and tryptophan 227. An NADP(+)-binding site is contributed by 270–280 (KSYNEQRIRQN).

This sequence belongs to the aldo/keto reductase family. Expressed in fetal testes. Expressed in fetal and adult adrenal glands.

The protein localises to the cytoplasm. Its subcellular location is the cytosol. It catalyses the reaction a 3alpha-hydroxysteroid + NADP(+) = a 3-oxosteroid + NADPH + H(+). It carries out the reaction a 3alpha-hydroxysteroid + NAD(+) = a 3-oxosteroid + NADH + H(+). The catalysed reaction is 5alpha-androstane-3alpha,17beta-diol + NADP(+) = 17beta-hydroxy-5alpha-androstan-3-one + NADPH + H(+). The enzyme catalyses 5alpha-androstane-3alpha,17beta-diol + NAD(+) = 17beta-hydroxy-5alpha-androstan-3-one + NADH + H(+). It catalyses the reaction 5alpha-androstane-3alpha,17beta-diol + NAD(+) = androsterone + NADH + H(+). It carries out the reaction 17beta-estradiol + NADP(+) = estrone + NADPH + H(+). The catalysed reaction is 17beta-estradiol + NAD(+) = estrone + NADH + H(+). The enzyme catalyses (20S)-hydroxypregn-4-en-3-one + NADP(+) = progesterone + NADPH + H(+). It catalyses the reaction (20S)-hydroxypregn-4-en-3-one + NAD(+) = progesterone + NADH + H(+). It carries out the reaction androsterone + NADP(+) = 5alpha-androstan-3,17-dione + NADPH + H(+). The catalysed reaction is (3beta,5alpha,17beta)-3-hydroxy-androstan-17-yl sulfate + NADP(+) = 5alpha-dihydrotestosterone sulfate + NADPH + H(+). The enzyme catalyses (1R,2R)-1,2-dihydrobenzene-1,2-diol + NADP(+) = catechol + NADPH + H(+). It catalyses the reaction (S)-indan-1-ol + NAD(+) = indan-1-one + NADH + H(+). It carries out the reaction (S)-indan-1-ol + NADP(+) = indan-1-one + NADPH + H(+). It functions in the pathway steroid metabolism. With respect to regulation, inhibited by hexestrol with an IC(50) of 2.8 uM, 1,10-phenanthroline with an IC(50) of 2100 uM, 1,7-phenanthroline with an IC(50) of 1500 uM, flufenamic acid with an IC(50) of 0.9 uM, indomethacin with an IC(50) of 75 uM, ibuprofen with an IC(50) of 6.9 uM, lithocholic acid with an IC(50) of 0.07 uM, ursodeoxycholic acid with an IC(50) of 0.08 uM and chenodeoxycholic acid with an IC(50) of 0.13 uM. The oxidation reaction is inhibited by low micromolar concentrations of NADPH. In terms of biological role, cytosolic aldo-keto reductase that catalyzes the NADH and NADPH-dependent reduction of ketosteroids to hydroxysteroids. Most probably acts as a reductase in vivo since the oxidase activity measured in vitro is inhibited by physiological concentrations of NADPH. Displays a broad positional specificity acting on positions 3, 17 and 20 of steroids and regulates the metabolism of hormones like estrogens and androgens. Works in concert with the 5-alpha/5-beta-steroid reductases to convert steroid hormones into the 3-alpha/5-alpha and 3-alpha/5-beta-tetrahydrosteroids. Catalyzes the inactivation of the most potent androgen 5-alpha-dihydrotestosterone (5-alpha-DHT) to 5-alpha-androstane-3-alpha,17-beta-diol (3-alpha-diol). Also specifically able to produce 17beta-hydroxy-5alpha-androstan-3-one/5alphaDHT. May also reduce conjugated steroids such as 5alpha-dihydrotestosterone sulfate. Displays affinity for bile acids. The sequence is that of Aldo-keto reductase family 1 member C2 (AKR1C2) from Homo sapiens (Human).